Reading from the N-terminus, the 90-residue chain is MYLELHFQFLFRFFSLIPIPCTIPNFRYHTRLLISRNXVFMNKLKMALLVVFLVSLFACTTIHQPKETVKSRFLKNNRLNKISIINIYTT.

A helical membrane pass occupies residues 46–62 (MALLVVFLVSLFACTTI).

The protein localises to the membrane. This is an uncharacterized protein from Haemophilus influenzae (strain ATCC 51907 / DSM 11121 / KW20 / Rd).